The sequence spans 194 residues: MAAGQPRPPPPPSSVRTERVLRAACAAMAAAGALLLGFSAETKTVIFVQKKAVPKDVQALWVLIVAAAAAAAYHAAQLARCLCMDRLAGGGGGCRRLRRAVACATFLLDKGCAYMVLATTVAALQACFVGLLGVEALQWSKLCNIYTRFCEQAAAGMVCSLVAAAGMAVLSAFSARDLFRRRRPCSPCVQVQQV.

At 1-27 the chain is on the cytoplasmic side; that stretch reads MAAGQPRPPPPPSSVRTERVLRAACAA. A helical transmembrane segment spans residues 28-48; that stretch reads MAAAGALLLGFSAETKTVIFV. Topologically, residues 49–58 are extracellular; sequence QKKAVPKDVQ. Residues 59–79 form a helical membrane-spanning segment; it reads ALWVLIVAAAAAAAYHAAQLA. The Cytoplasmic segment spans residues 80–113; it reads RCLCMDRLAGGGGGCRRLRRAVACATFLLDKGCA. The chain crosses the membrane as a helical span at residues 114–134; that stretch reads YMVLATTVAALQACFVGLLGV. Residues 135–152 lie on the Extracellular side of the membrane; sequence EALQWSKLCNIYTRFCEQ. A helical membrane pass occupies residues 153–173; it reads AAAGMVCSLVAAAGMAVLSAF. Over 174-194 the chain is Cytoplasmic; it reads SARDLFRRRRPCSPCVQVQQV.

It belongs to the Casparian strip membrane proteins (CASP) family. In terms of assembly, homodimer and heterodimers.

Its subcellular location is the cell membrane. The polypeptide is CASP-like protein 2C2 (Sorghum bicolor (Sorghum)).